The chain runs to 718 residues: Protein spire homolog 2 (718 aa).

Disordered stretches follow at residues 1–22 (MARA…ARPE) and 143–166 (DSSC…EGGP). Positions 10 to 21 (AAPERAGGAARP) are enriched in low complexity. Positions 26–207 (LSLEEVLKVY…RALFVETLEL (182 aa)) constitute a KIND domain. 3 consecutive WH2 domains span residues 251–265 (QLMR…LKKV), 281–299 (PFEM…LRKV), and 345–362 (LHEK…LRPV). Serine 374 bears the Phosphoserine mark. The disordered stretch occupies residues 397–434 (TDTGSGSQRPRPRVLLKAPTLAEMEEMNTSEEEESPCG). Residues 419-432 (EMEEMNTSEEEESP) show a composition bias toward acidic residues. Serine 443, serine 445, and serine 479 each carry phosphoserine. The tract at residues 456-518 (MASGLQSAAQ…SSLSSVDGPE (63 aa)) is disordered. The segment covering 496–513 (SGQSQPLPSSALPSSLSS) has biased composition (low complexity). Residues 538-558 (LALTVEEVVDVRRVLVKAEME) are spir-box.

This sequence belongs to the spire family. Detected in oocytes.

Its subcellular location is the cytoplasm. The protein localises to the cytoskeleton. The protein resides in the cytosol. It localises to the cell membrane. It is found in the cytoplasmic vesicle membrane. In terms of biological role, acts as an actin nucleation factor, remains associated with the slow-growing pointed end of the new filament. Involved in intracellular vesicle transport along actin fibers, providing a novel link between actin cytoskeleton dynamics and intracellular transport. Required for asymmetric spindle positioning and asymmetric cell division during oocyte meiosis. Required for normal formation of the cleavage furrow and for polar body extrusion during female germ cell meiosis. Also acts in the nucleus: together with SPIRE1 and SPIRE2, promotes assembly of nuclear actin filaments in response to DNA damage in order to facilitate movement of chromatin and repair factors after DNA damage. This Mus musculus (Mouse) protein is Protein spire homolog 2 (Spire2).